The primary structure comprises 463 residues: Cysteine--tRNA ligase (463 aa).

Cys-29 is a Zn(2+) binding site. The short motif at 31 to 41 (PTVYDFAHIGN) is the 'HIGH' region element. Zn(2+) contacts are provided by Cys-227, His-252, and Glu-256. Residues 285–289 (KMSKS) carry the 'KMSKS' region motif. Residue Lys-288 coordinates ATP.

It belongs to the class-I aminoacyl-tRNA synthetase family. As to quaternary structure, monomer. The cofactor is Zn(2+).

The protein resides in the cytoplasm. It catalyses the reaction tRNA(Cys) + L-cysteine + ATP = L-cysteinyl-tRNA(Cys) + AMP + diphosphate. The protein is Cysteine--tRNA ligase of Rhodopseudomonas palustris (strain BisA53).